Here is a 428-residue protein sequence, read N- to C-terminus: GTPase Obg (428 aa).

The Obg domain occupies 1–158 (MFVDKVKVYA…RNLLLELKVL (158 aa)). An OBG-type G domain is found at 159–329 (ADVGLVGFPS…LMLAIADELE (171 aa)). GTP contacts are provided by residues 165–172 (GFPSVGKS), 190–194 (FTTIT), 212–215 (DLPG), 282–285 (NKMD), and 310–312 (SAI). 2 residues coordinate Mg(2+): Ser-172 and Thr-192. The 79-residue stretch at 350–428 (KHELPIEPFT…IMKFEFEFVE (79 aa)) folds into the OCT domain.

Belongs to the TRAFAC class OBG-HflX-like GTPase superfamily. OBG GTPase family. As to quaternary structure, monomer. Requires Mg(2+) as cofactor.

Its subcellular location is the cytoplasm. Its function is as follows. An essential GTPase which binds GTP, GDP and possibly (p)ppGpp with moderate affinity, with high nucleotide exchange rates and a fairly low GTP hydrolysis rate. Plays a role in control of the cell cycle, stress response, ribosome biogenesis and in those bacteria that undergo differentiation, in morphogenesis control. The chain is GTPase Obg from Shouchella clausii (strain KSM-K16) (Alkalihalobacillus clausii).